We begin with the raw amino-acid sequence, 222 residues long: UPF0758 protein YicR (222 aa).

The region spanning 100 to 222 is the MPN domain; sequence PLLSPEMTRE…YVSFAERGWI (123 aa). Residues His-171, His-173, and Asp-184 each coordinate Zn(2+). Positions 171-184 match the JAMM motif motif; it reads HNHPSGCAEPSKAD.

It belongs to the UPF0758 family. YicR subfamily.

In Escherichia coli O9:H4 (strain HS), this protein is UPF0758 protein YicR.